A 662-amino-acid polypeptide reads, in one-letter code: Biosynthetic arginine decarboxylase (662 aa).

At Lys127 the chain carries N6-(pyridoxal phosphate)lysine. Substrate is bound at residue 307–317 (FDVGGGLGVDY).

It belongs to the Orn/Lys/Arg decarboxylase class-II family. SpeA subfamily. In terms of assembly, homotetramer. Mg(2+) serves as cofactor. Pyridoxal 5'-phosphate is required as a cofactor.

It localises to the periplasm. It catalyses the reaction L-arginine + H(+) = agmatine + CO2. It participates in amine and polyamine biosynthesis; agmatine biosynthesis; agmatine from L-arginine: step 1/1. In terms of biological role, catalyzes the biosynthesis of agmatine from arginine. The chain is Biosynthetic arginine decarboxylase from Shigella flexneri.